Reading from the N-terminus, the 941-residue chain is Bifunctional glutamine synthetase adenylyltransferase/adenylyl-removing enzyme (941 aa).

The adenylyl removase stretch occupies residues 1 to 431; sequence MSSAPPFAAA…TFRNAFRLAG (431 aa). The interval 447–941 is adenylyl transferase; that stretch reads NGHGMRPHAG…DGTIAQAEVK (495 aa).

Belongs to the GlnE family. The cofactor is Mg(2+).

It carries out the reaction [glutamine synthetase]-O(4)-(5'-adenylyl)-L-tyrosine + phosphate = [glutamine synthetase]-L-tyrosine + ADP. The enzyme catalyses [glutamine synthetase]-L-tyrosine + ATP = [glutamine synthetase]-O(4)-(5'-adenylyl)-L-tyrosine + diphosphate. Functionally, involved in the regulation of glutamine synthetase GlnA, a key enzyme in the process to assimilate ammonia. When cellular nitrogen levels are high, the C-terminal adenylyl transferase (AT) inactivates GlnA by covalent transfer of an adenylyl group from ATP to specific tyrosine residue of GlnA, thus reducing its activity. Conversely, when nitrogen levels are low, the N-terminal adenylyl removase (AR) activates GlnA by removing the adenylyl group by phosphorolysis, increasing its activity. The regulatory region of GlnE binds the signal transduction protein PII (GlnB) which indicates the nitrogen status of the cell. This is Bifunctional glutamine synthetase adenylyltransferase/adenylyl-removing enzyme from Bordetella bronchiseptica (strain ATCC BAA-588 / NCTC 13252 / RB50) (Alcaligenes bronchisepticus).